Consider the following 504-residue polypeptide: Subtilisin-like protease 1 (504 aa).

Residues 1–19 (MGVFRFISISLAAVSAANA) form the signal peptide. A propeptide spanning residues 20 to 116 (AQILSMPHAQ…VEPDTIVSVH (97 aa)) is cleaved from the precursor. The Inhibitor I9 domain occupies 34–116 (SYIVMMKDDT…VEPDTIVSVH (83 aa)). In terms of domain architecture, Peptidase S8 spans 126 to 400 (SWGLARISNP…NVLINNGGAK (275 aa)). Active-site charge relay system residues include aspartate 158 and histidine 190. Residues 172–198 (AIWGSNQVNDGDDRDGSGHGTHTSGTM) form a disordered region. 2 N-linked (GlcNAc...) asparagine glycosylation sites follow: asparagine 233 and asparagine 251. Residues 282–294 (NDNQDAQSSSPAS) are compositionally biased toward polar residues. The interval 282–312 (NDNQDAQSSSPASEPSVCTVGSSAEDDSRSS) is disordered. The active-site Charge relay system is serine 345. Residues 378–394 (TSSITDAGPGTPTNVLI) are compositionally biased toward polar residues. The segment at 378–483 (TSSITDAGPG…YPGGDNFDFD (106 aa)) is disordered. Pro residues-rich tracts occupy residues 405 to 449 (NPNP…PGQP) and 457 to 473 (APAP…PHTP).

This sequence belongs to the peptidase S8 family.

The protein resides in the secreted. In terms of biological role, secreted subtilisin-like serine protease with keratinolytic activity that contributes to pathogenicity. The protein is Subtilisin-like protease 1 (SUB1) of Trichophyton rubrum (Athlete's foot fungus).